The following is a 107-amino-acid chain: Biphenyl 2,3-dioxygenase, ferredoxin component (107 aa).

The region spanning Thr4 to Val99 is the Rieske domain. [2Fe-2S] cluster contacts are provided by Cys43, His45, Cys62, and His65.

This sequence belongs to the bacterial ring-hydroxylating dioxygenase ferredoxin component family. In terms of assembly, the multicomponent biphenyl dioxygenase system is composed of a ferredoxin reductase (BphA4), a ferredoxin (BphA3), and a terminal oxygenase (BphA1A2). Requires [2Fe-2S] cluster as cofactor.

The protein operates within xenobiotic degradation; biphenyl degradation. Functionally, ferredoxin component of the biphenyl dioxygenase system that catalyzes the stereospecific dihydroxylation of the aromatic ring of biphenyl, yielding a dihydrodiol compound. Is likely involved in biphenyl degradation that allows growth of Rhodococcus sp. strain RHA1 on biphenyl as the sole source of carbon and energy. The dioxygenase system can also use naphtalene and 4-chlorobiphenyl (4-CB) as substrates, as well as some polychlorinated biphenyls (PCB) such as 2,2'-dichlorobiphenyl, 2,3-dichlorobiphenyl and 2,5,2'-trichlorobiphenyl. It exhibits weak activity toward dibenzofuran and dibenzo-p-dioxin. Electrons are transferred from NADH to the [2Fe-2S] cluster in BphA1 via FAD of BphA4 and [2Fe-2S] cluster of BphA3. The polypeptide is Biphenyl 2,3-dioxygenase, ferredoxin component (Rhodococcus jostii (strain RHA1)).